Consider the following 227-residue polypeptide: NAD(P)H-quinone oxidoreductase subunit K, chloroplastic (227 aa).

The [4Fe-4S] cluster site is built by C43, C44, C108, and C139.

Belongs to the complex I 20 kDa subunit family. As to quaternary structure, NDH is composed of at least 16 different subunits, 5 of which are encoded in the nucleus. It depends on [4Fe-4S] cluster as a cofactor.

The protein resides in the plastid. It is found in the chloroplast thylakoid membrane. The catalysed reaction is a plastoquinone + NADH + (n+1) H(+)(in) = a plastoquinol + NAD(+) + n H(+)(out). The enzyme catalyses a plastoquinone + NADPH + (n+1) H(+)(in) = a plastoquinol + NADP(+) + n H(+)(out). NDH shuttles electrons from NAD(P)H:plastoquinone, via FMN and iron-sulfur (Fe-S) centers, to quinones in the photosynthetic chain and possibly in a chloroplast respiratory chain. The immediate electron acceptor for the enzyme in this species is believed to be plastoquinone. Couples the redox reaction to proton translocation, and thus conserves the redox energy in a proton gradient. The protein is NAD(P)H-quinone oxidoreductase subunit K, chloroplastic of Ranunculus macranthus (Large buttercup).